A 443-amino-acid polypeptide reads, in one-letter code: Xaa-Pro dipeptidase (443 aa).

Mn(2+)-binding residues include D246, D257, H339, E384, and E423.

Belongs to the peptidase M24B family. Bacterial-type prolidase subfamily. It depends on Mn(2+) as a cofactor.

The enzyme catalyses Xaa-L-Pro dipeptide + H2O = an L-alpha-amino acid + L-proline. Its function is as follows. Splits dipeptides with a prolyl residue in the C-terminal position. This Shigella boydii serotype 18 (strain CDC 3083-94 / BS512) protein is Xaa-Pro dipeptidase.